The chain runs to 348 residues: Dihydroorotase (348 aa).

Zn(2+) is bound by residues H14 and H16. Residues 16-18 (HLR) and N42 contribute to the substrate site. 3 residues coordinate Zn(2+): K100, H137, and H175. Residue K100 is modified to N6-carboxylysine. Residue H137 coordinates substrate. L220 contacts substrate. Zn(2+) is bound at residue D248. D248 is a catalytic residue. The substrate site is built by H252 and A264.

It belongs to the metallo-dependent hydrolases superfamily. DHOase family. Class II DHOase subfamily. Homodimer. It depends on Zn(2+) as a cofactor.

The catalysed reaction is (S)-dihydroorotate + H2O = N-carbamoyl-L-aspartate + H(+). Its pathway is pyrimidine metabolism; UMP biosynthesis via de novo pathway; (S)-dihydroorotate from bicarbonate: step 3/3. Catalyzes the reversible cyclization of carbamoyl aspartate to dihydroorotate. The polypeptide is Dihydroorotase (Pseudomonas entomophila (strain L48)).